Here is a 350-residue protein sequence, read N- to C-terminus: Phenylalanine--tRNA ligase alpha subunit (350 aa).

Glutamate 257 contributes to the Mg(2+) binding site.

Belongs to the class-II aminoacyl-tRNA synthetase family. Phe-tRNA synthetase alpha subunit type 1 subfamily. Tetramer of two alpha and two beta subunits. Mg(2+) is required as a cofactor.

The protein resides in the cytoplasm. It catalyses the reaction tRNA(Phe) + L-phenylalanine + ATP = L-phenylalanyl-tRNA(Phe) + AMP + diphosphate + H(+). The protein is Phenylalanine--tRNA ligase alpha subunit of Listeria welshimeri serovar 6b (strain ATCC 35897 / DSM 20650 / CCUG 15529 / CIP 8149 / NCTC 11857 / SLCC 5334 / V8).